A 223-amino-acid polypeptide reads, in one-letter code: 2-C-methyl-D-erythritol 4-phosphate cytidylyltransferase (223 aa).

It belongs to the IspD/TarI cytidylyltransferase family. IspD subfamily.

The enzyme catalyses 2-C-methyl-D-erythritol 4-phosphate + CTP + H(+) = 4-CDP-2-C-methyl-D-erythritol + diphosphate. It participates in isoprenoid biosynthesis; isopentenyl diphosphate biosynthesis via DXP pathway; isopentenyl diphosphate from 1-deoxy-D-xylulose 5-phosphate: step 2/6. In terms of biological role, catalyzes the formation of 4-diphosphocytidyl-2-C-methyl-D-erythritol from CTP and 2-C-methyl-D-erythritol 4-phosphate (MEP). This is 2-C-methyl-D-erythritol 4-phosphate cytidylyltransferase from Prochlorococcus marinus subsp. pastoris (strain CCMP1986 / NIES-2087 / MED4).